We begin with the raw amino-acid sequence, 501 residues long: Solute carrier family 2, facilitated glucose transporter member 5 (501 aa).

The residue at position 1 (Met1) is an N-acetylmethionine. The Cytoplasmic segment spans residues 1–18 (MEQQDQSMKEGRLTLVLA). The helical transmembrane segment at 19-39 (LATLIAAFGSSFQYGYNVAAV) threads the bilayer. Tyr32 is a binding site for D-fructose. Over 40–68 (NSPALLMQQFYNETYYGRTGEFMEDFPLT) the chain is Extracellular. A glycan (N-linked (GlcNAc...) asparagine) is linked at Asn51. Residues 69 to 91 (LLWSVTVSMFPFGGFIGSLLVGP) traverse the membrane as a helical segment. Topologically, residues 92-98 (LVNKFGR) are cytoplasmic. The helical transmembrane segment at 99-119 (KGALLFNNIFSIVPAILMGCS) threads the bilayer. At 120–126 (RVATSFE) the chain is on the extracellular side. The helical transmembrane segment at 127–149 (LIIISRLLVGICAGVSSNVVPMY) threads the bilayer. At 150–161 (LGELAPKNLRGA) the chain is on the cytoplasmic side. A helical membrane pass occupies residues 162–182 (LGVVPQLFITVGILVAQIFGL). Gln167 provides a ligand contact to D-fructose. Residues 183 to 192 (RNLLANVDGW) are Extracellular-facing. Residues 193–213 (PILLGLTGVPAALQLLLLPFF) traverse the membrane as a helical segment. Residues 214–277 (PESPRYLLIQ…LFRMRSLRWQ (64 aa)) lie on the Cytoplasmic side of the membrane. The chain crosses the membrane as a helical span at residues 278 to 298 (LLSIIVLMGGQQLSGVNAIYY). Residues Gln288 and 296–298 (IYY) each bind D-fructose. At 299 to 313 (YADQIYLSAGVPEEH) the chain is on the extracellular side. A helical transmembrane segment spans residues 314–334 (VQYVTAGTGAVNVVMTFCAVF). Topologically, residues 335–342 (VVELLGRR) are cytoplasmic. A helical transmembrane segment spans residues 343–363 (LLLLLGFSICLIACCVLTAAL). The Extracellular portion of the chain corresponds to 364 to 371 (ALQDTVSW). The helical transmembrane segment at 372 to 394 (MPYISIVCVISYVIGHALGPSPI) threads the bilayer. D-fructose is bound at residue His387. Topologically, residues 395–412 (PALLITEIFLQSSRPSAF) are cytoplasmic. The helical transmembrane segment at 413–433 (MVGGSVHWLSNFTVGLIFPFI) threads the bilayer. Residue 419-420 (HW) coordinates D-fructose. At 434–439 (QEGLGP) the chain is on the extracellular side. The helical transmembrane segment at 440 to 460 (YSFIVFAVICLLTTIYIFLIV) threads the bilayer. The Cytoplasmic portion of the chain corresponds to 461–501 (PETKAKTFIEINQIFTKMNKVSEVYPEKEELKELPPVTSEQ).

As to expression, detected in skeletal muscle, and in jejunum brush border membrane and basolateral membrane (at protein level). Expressed in small intestine, and at much lower levels in kidney, skeletal muscle, and adipose tissue.

Its subcellular location is the apical cell membrane. The protein localises to the cell membrane. It is found in the sarcolemma. The catalysed reaction is D-fructose(out) = D-fructose(in). Its activity is regulated as follows. The uptake of 2-deoxyglucose is inhibited by cytochalasin B. Fructose transport is inhibited by the flavonoids epigallocatechin gallate and apigenin but not quercetin. Its function is as follows. Functions as a fructose transporter that has only low activity with other monosaccharides. Can mediate the uptake of 2-deoxyglucose, but with low efficiency. Essential for fructose uptake in the small intestine. Plays a role in the regulation of salt uptake and blood pressure in response to dietary fructose. Required for the development of high blood pressure in response to high dietary fructose intake. The protein is Solute carrier family 2, facilitated glucose transporter member 5 of Homo sapiens (Human).